Consider the following 1059-residue polypeptide: Ubiquitin carboxyl-terminal hydrolase 36 (1059 aa).

2 disordered regions span residues 24–49 (VGNG…DSEM) and 94–148 (SNNN…KPKR). A compositionally biased stretch (low complexity) spans 94 to 123 (SNNNNSSSCNGSNFGNSKVVGANGHDNGNN). Residues 130 to 139 (QSESTQSGPS) are compositionally biased toward polar residues. The 309-residue stretch at 171-479 (TGMINVGNTC…NAYIMFYELD (309 aa)) folds into the USP domain. Cysteine 180 serves as the catalytic Nucleophile. Catalysis depends on histidine 438, which acts as the Proton acceptor. Residues 505–673 (TVSSSSPTHT…KTPLKSSVKT (169 aa)) form a disordered region. Phosphoserine is present on residues serine 508 and serine 510. Positions 528–539 (GYSNGHATGSSN) are enriched in polar residues. Composition is skewed to low complexity over residues 540 to 560 (AQKT…NGLQ), 592 to 611 (NGNK…KSVN), and 633 to 647 (ATAT…RPTA). Residues 655 to 664 (MTEDSSDKPK) show a composition bias toward basic and acidic residues. A phosphothreonine mark is found at threonine 673 and threonine 682. Disordered regions lie at residues 687–893 (LVPY…EAST), 926–998 (KELV…RYHN), and 1012–1059 (KYNR…QSSS). Residues serine 692 and serine 694 each carry the phosphoserine modification. Low complexity-rich tracts occupy residues 729–739 (TKTNGGSLTNG) and 752–765 (SSSS…ASAA). Serine 766 carries the post-translational modification Phosphoserine. A compositionally biased stretch (acidic residues) spans 766–776 (SDDEDADEEEE). Polar residues predominate over residues 779 to 795 (KLTNGWQPQKQSQSLTQ). The span at 799 to 808 (PPSPKTPPSP) shows a compositional bias: pro residues. Serine 801 is modified (phosphoserine). Threonine 804 is subject to Phosphothreonine. Phosphoserine is present on serine 807. The span at 825-839 (DNEDEDDDDDEDEEE) shows a compositional bias: acidic residues. 2 stretches are compositionally biased toward polar residues: residues 842–862 (QVVS…STTP) and 876–893 (KSQQ…EAST). Phosphothreonine occurs at positions 846 and 861. Basic and acidic residues predominate over residues 926 to 940 (KELVAEAREQRQHDH). Positions 1048–1059 (QQQQQQSQQSSS) are enriched in low complexity.

It belongs to the peptidase C19 family. Interacts with atms/PAF1, but not with CycT.

The protein localises to the nucleus. It is found in the nucleolus. It carries out the reaction Thiol-dependent hydrolysis of ester, thioester, amide, peptide and isopeptide bonds formed by the C-terminal Gly of ubiquitin (a 76-residue protein attached to proteins as an intracellular targeting signal).. Required for maintaining multiple types of adult stem cells, including male and female germline, epithelial follicle cell and intestinal stem cells. May function as a transcriptional repressor by continually deubiquiting histone H2B at the promoters of genes critical for cellular differentiation, thereby preventing histone H3 'Lys-4' trimethylation (H3K4). Controls selective autophagy activation by ubiquitinated proteins. The polypeptide is Ubiquitin carboxyl-terminal hydrolase 36 (Usp36) (Drosophila pseudoobscura pseudoobscura (Fruit fly)).